The following is a 502-amino-acid chain: D-erythritol 1-phosphate dehydrogenase (502 aa).

Residue 8-36 (DLFVIGGGINGAGVARDAAGRGLKVVLAE) participates in FAD binding.

Belongs to the FAD-dependent glycerol-3-phosphate dehydrogenase family. FAD serves as cofactor.

The enzyme catalyses D-erythritol 1-phosphate + NADP(+) = D-erythrulose 1-phosphate + NADPH + H(+). Its pathway is carbohydrate metabolism; erythritol degradation. Catalyzes the oxydation of D-erythritol 1-phosphate to D-erythrulose 1-phosphate. This chain is D-erythritol 1-phosphate dehydrogenase, found in Brucella abortus (strain 2308).